A 75-amino-acid polypeptide reads, in one-letter code: Small integral membrane protein 7 (75 aa).

A signal peptide spans 1-17 (MIGDILLFGTLLMNAGA). Topologically, residues 18-53 (VLNFKLKKKDTQGFGEESKEPSTGDNIREFLLSLRY) are extracellular. Residues 54–74 (FRIFIALWNVFMMLCMIVLFG) form a helical membrane-spanning segment. Residue serine 75 is a topological domain, cytoplasmic.

This sequence belongs to the SMIM7 family.

It is found in the membrane. The polypeptide is Small integral membrane protein 7 (Smim7) (Mus musculus (Mouse)).